The chain runs to 174 residues: Protein-lysine myristoyltransferase HlyC (174 aa).

Active-site residues include histidine 23 and aspartate 92. Histidine 151 provides a ligand contact to heme.

Belongs to the RTX toxin acyltransferase family. In terms of assembly, monomer. Proteolytically cleaved by the protease systems ClpAP, ClpXP and FtsH, leading to its degradation.

The protein resides in the cytoplasm. The enzyme catalyses tetradecanoyl-[ACP] + L-lysyl-[protein] = N(6)-tetradecanoyl-L-lysyl-[protein] + holo-[ACP] + H(+). The acyltransferase activity is inhibited by heme. Protein-lysine myristoyltransferase that catalyzes myristoylation of the protoxin (HlyA) at two internal lysine residues, thereby converting it to the active toxin. The protein is Protein-lysine myristoyltransferase HlyC of Escherichia coli.